A 309-amino-acid polypeptide reads, in one-letter code: Dicarboxylate carrier UCP2 (309 aa).

The Mitochondrial intermembrane portion of the chain corresponds to 1-16 (MVGFKATDVPPTATVK). Solcar repeat units lie at residues 11–106 (PTAT…VKQF), 114–203 (AGIG…IKDT), and 212–297 (DDLP…LKRA). Residues 16-63 (KFLGAGTAACIADLITFPLDTAKVRLQIQGESQGLVRTAASAQYRGVL) form an important for interaction with long-chain fatty acids region. The helical transmembrane segment at 17–40 (FLGAGTAACIADLITFPLDTAKVR) threads the bilayer. Residues 41 to 77 (LQIQGESQGLVRTAASAQYRGVLGTILTMVRTEGPRS) are Mitochondrial matrix-facing. Residues 78–103 (LYNGLVAGLQRQMSFASVRIGLYDSV) form a helical membrane-spanning segment. Over 104–119 (KQFYTKGSEHAGIGSR) the chain is Mitochondrial intermembrane. Residues 120–145 (LLAGSTTGALAVAVAQPTDVVKVRFQ) form a helical membrane-spanning segment. At 146–173 (AQARAGGGRRYQSTVEAYKTIAREEGIR) the chain is on the mitochondrial matrix side. A helical transmembrane segment spans residues 174-199 (GLWKGTSPNVARNAIVNCAELVTYDL). At 200–217 (IKDTLLKANLMTDDLPCH) the chain is on the mitochondrial intermembrane side. Residues 218–242 (FTSAFGAGFCTTVIASPVDVVKTRY) traverse the membrane as a helical segment. The Mitochondrial matrix segment spans residues 243 to 268 (MNSALGQYHSAGHCALTMLRKEGPRA). A helical membrane pass occupies residues 269-294 (FYKGFMPSFLRLGSWNVVMFVTYEQL). The important for interaction with long-chain fatty acids stretch occupies residues 278 to 285 (LRLGSWNV). Topologically, residues 295 to 309 (KRALMAAYQSREAPF) are mitochondrial intermembrane.

Belongs to the mitochondrial carrier (TC 2.A.29) family. As to quaternary structure, homotetramer. Adopts an asymmetrical dimer of dimers functional form. Interacts with MICU1 (when methylated); leading to decrease the calcium sensitivity of MICU1. As to expression, widely expressed. Highest in spleen, lung, white and brown adipose tissues. 4-6 times higher levels are detected in white adipose tissue of ob/ob and db/db mice when compared to lean littermates. Expressed in neurons of the ventromedial nucleus of the hypothalamus (at protein level). Expressed in thymocytes (at protein level).

The protein resides in the mitochondrion inner membrane. It carries out the reaction L-aspartate(out) + phosphate(in) + H(+)(in) = L-aspartate(in) + phosphate(out) + H(+)(out). The catalysed reaction is oxaloacetate(out) + phosphate(in) + H(+)(in) = oxaloacetate(in) + phosphate(out) + H(+)(out). It catalyses the reaction (S)-malate(out) + phosphate(in) + H(+)(in) = (S)-malate(in) + phosphate(out) + H(+)(out). The enzyme catalyses malonate(out) + phosphate(in) + H(+)(in) = malonate(in) + phosphate(out) + H(+)(out). It carries out the reaction sulfate(out) + phosphate(in) + H(+)(in) = sulfate(in) + phosphate(out) + H(+)(out). The catalysed reaction is (S)-malate(out) = (S)-malate(in). It catalyses the reaction L-aspartate(out) = L-aspartate(in). The enzyme catalyses phosphate(in) = phosphate(out). It carries out the reaction chloride(in) = chloride(out). The catalysed reaction is H(+)(in) = H(+)(out). It catalyses the reaction a long-chain fatty acid(out) = a long-chain fatty acid(in). Proton conductance is activated by free long-chain fatty acids and allosterically inhibited by purine nucleotides. Could be constitutively inhibited by GDP. Its function is as follows. Antiporter that exports dicarboxylate intermediates of the Krebs cycle in exchange for phosphate plus a proton across the inner membrane of mitochondria, a process driven by mitochondrial motive force with an overall impact on glycolysis, glutaminolysis and glutathione-dependent redox balance. Continuous export of oxaloacetate and related four-carbon dicarboxylates from mitochondrial matrix into the cytosol negatively regulates the oxidation of acetyl-CoA substrates via the Krebs cycle lowering the ATP/ADP ratio and reactive oxygen species (ROS) production. May mediate inducible proton entry into the mitochondrial matrix affecting ATP turnover as a protection mechanism against oxidative stress. The proton currents are most likely associated with fatty acid flipping across the inner membrane of mitochondria in a metabolic process regulated by free fatty acids and purine nucleotides. Regulates the use of glucose as a source of energy. Required for glucose-induced DRP1-dependent mitochondrial fission and neuron activation in the ventromedial nucleus of the hypothalamus (VMH). This mitochondrial adaptation mechanism modulates the VMH pool of glucose-excited neurons with an impact on systemic glucose homeostasis. Regulates ROS levels and metabolic reprogramming of macrophages during the resolution phase of inflammation. Attenuates ROS production in response to IL33 to preserve the integrity of the Krebs cycle required for persistent production of itaconate and subsequent GATA3-dependent differentiation of inflammation-resolving alternatively activated macrophages. Can unidirectionally transport anions including L-malate, L-aspartate, phosphate and chloride ions. Does not mediate adaptive thermogenesis. This chain is Dicarboxylate carrier UCP2 (Ucp2), found in Mus musculus (Mouse).